The primary structure comprises 122 residues: Small ribosomal subunit protein uS13 (122 aa).

The tract at residues 94 to 122 is disordered; it reads LSLPVRGQRTKTNSRTRKGKRKTVAGKKK. Residues 101 to 122 are compositionally biased toward basic residues; that stretch reads QRTKTNSRTRKGKRKTVAGKKK.

This sequence belongs to the universal ribosomal protein uS13 family. In terms of assembly, part of the 30S ribosomal subunit. Forms a loose heterodimer with protein S19. Forms two bridges to the 50S subunit in the 70S ribosome.

Located at the top of the head of the 30S subunit, it contacts several helices of the 16S rRNA. In the 70S ribosome it contacts the 23S rRNA (bridge B1a) and protein L5 of the 50S subunit (bridge B1b), connecting the 2 subunits; these bridges are implicated in subunit movement. Contacts the tRNAs in the A and P-sites. In Chlamydia trachomatis serovar A (strain ATCC VR-571B / DSM 19440 / HAR-13), this protein is Small ribosomal subunit protein uS13.